A 347-amino-acid polypeptide reads, in one-letter code: MPDPLALAISTGEPAGIGPDITIGALLQLAGQNGHARYHVLGDAHLLASRAAALGVAHAWERRIAEGEVVIHHVPLAVACEPGRLDARNGPYVLSMLDAAIAGCRTHAGAPARFAAMVTAPVQKSTINDAGVPFTGHTEYLAEAAGVPRVVMMLAGPQPAHANAMLRVALATTHLPLRAVADAVTVPLLLETLSIIDADLRRWFGIARPRILVTGLNPHAGESGHMGREEINVIEPALAQARDAGIDARGPYPADTLFQPRHLRDADCVLAMYHDQGLAPLKYGTFGHGVNITLGLPFIRTSVDHGTALDLAGSGQAEHGSMIEAIRSAVTMAGHANGRHASARVPH.

Substrate-binding residues include His-137 and Thr-138. A divalent metal cation contacts are provided by His-174, His-219, and His-274. Lys-282, Asn-291, and Arg-300 together coordinate substrate.

The protein belongs to the PdxA family. As to quaternary structure, homodimer. It depends on Zn(2+) as a cofactor. The cofactor is Mg(2+). Requires Co(2+) as cofactor.

It is found in the cytoplasm. The catalysed reaction is 4-(phosphooxy)-L-threonine + NAD(+) = 3-amino-2-oxopropyl phosphate + CO2 + NADH. Its pathway is cofactor biosynthesis; pyridoxine 5'-phosphate biosynthesis; pyridoxine 5'-phosphate from D-erythrose 4-phosphate: step 4/5. Catalyzes the NAD(P)-dependent oxidation of 4-(phosphooxy)-L-threonine (HTP) into 2-amino-3-oxo-4-(phosphooxy)butyric acid which spontaneously decarboxylates to form 3-amino-2-oxopropyl phosphate (AHAP). In Cupriavidus pinatubonensis (strain JMP 134 / LMG 1197) (Cupriavidus necator (strain JMP 134)), this protein is 4-hydroxythreonine-4-phosphate dehydrogenase.